The primary structure comprises 329 residues: Zygote arrest protein 1 (329 aa).

Disordered regions lie at residues 106-132 (LRRR…RTQA) and 146-218 (FREE…DDLK). The segment covering 149-162 (EGEEEEDTDLEVTE) has biased composition (acidic residues). Over residues 166–177 (SAEKLESAEKNV) the composition is skewed to basic and acidic residues. The 3CxxC-type zinc-finger motif lies at 231-314 (KYGFYHCKDC…RQDLCGRCKG (84 aa)).

The protein belongs to the ZAR1 family. As to expression, specifically expressed in ovaries but absent in testes.

It is found in the cytoplasm. Its subcellular location is the cytoplasmic ribonucleoprotein granule. In terms of biological role, mRNA-binding protein required for maternal mRNA storage, translation and degradation during oocyte maturation. Probably promotes formation of some phase-separated membraneless compartment that stores maternal mRNAs in oocytes: acts by undergoing liquid-liquid phase separation upon binding to maternal mRNAs. Binds to the 3'-UTR of zona pellucida mRNAs, inhibiting their translation. This is Zygote arrest protein 1 from Danio rerio (Zebrafish).